We begin with the raw amino-acid sequence, 417 residues long: L-rhamnose isomerase (417 aa).

Residues histidine 260, aspartate 292, and aspartate 294 each contribute to the Mn(2+) site.

This sequence belongs to the rhamnose isomerase family. It depends on Mn(2+) as a cofactor.

The protein localises to the cytoplasm. The enzyme catalyses L-rhamnopyranose = L-rhamnulose. Its pathway is carbohydrate degradation; L-rhamnose degradation; glycerone phosphate from L-rhamnose: step 1/3. Its function is as follows. Catalyzes the interconversion of L-rhamnose and L-rhamnulose. The sequence is that of L-rhamnose isomerase from Mannheimia succiniciproducens (strain KCTC 0769BP / MBEL55E).